A 263-amino-acid polypeptide reads, in one-letter code: Versicolorin reductase 1 (263 aa).

Residues Ile22, Asp68, Asn95, and Arg128 each coordinate NADP(+). Residues Ser144 and Ser145 each act as proton donor in the active site. The NADP(+) site is built by Tyr159, Lys163, Ile192, and Thr194. Tyr159 serves as the catalytic Proton acceptor. Lys163 acts as the Lowers pKa of active site Tyr in catalysis.

The protein belongs to the short-chain dehydrogenases/reductases (SDR) family.

It is found in the cytoplasm. The protein resides in the cytosol. It functions in the pathway mycotoxin biosynthesis. In terms of biological role, versicolorin reductase; part of the fragmented gene cluster that mediates the biosynthesis of dothistromin (DOTH), a polyketide toxin very similar in structure to the aflatoxin precursor, versicolorin B. The first step of the pathway is the conversion of acetate to norsolorinic acid (NOR) and requires the fatty acid synthase subunits hexA and hexB, as well as the polyketide synthase pksA. PksA combines a hexanoyl starter unit and 7 malonyl-CoA extender units to synthesize the precursor NOR. The hexanoyl starter unit is provided to the acyl-carrier protein (ACP) domain by the fungal fatty acid synthase hexA/hexB. The second step is the conversion of NOR to averantin (AVN) and requires the norsolorinic acid ketoreductase nor1, which catalyzes the dehydration of norsolorinic acid to form (1'S)-averantin. The cytochrome P450 monooxygenase avnA then catalyzes the hydroxylation of AVN to 5'hydroxyaverantin (HAVN). The next step is performed by adhA that transforms HAVN to averufin (AVF). Averufin might then be converted to hydroxyversicolorone by cypX and avfA. Hydroxyversicolorone is further converted versiconal hemiacetal acetate (VHA) by moxY. VHA is then the substrate for the versiconal hemiacetal acetate esterase est1 to yield versiconal (VAL). Versicolorin B synthase vbsA then converts VAL to versicolorin B (VERB) by closing the bisfuran ring. Then, the activity of the versicolorin B desaturase verB leads to versicolorin A (VERA). DotB, a predicted chloroperoxidase, may perform epoxidation of the A-ring of VERA. Alternatively, a cytochrome P450, such as cypX or avnA could catalyze this step. It is also possible that another, uncharacterized, cytochrome P450 enzyme is responsible for this step. Opening of the epoxide could potentially be achieved by the epoxide hydrolase epoA. However, epoA seems not to be required for DOTH biosynthesis, but other epoxide hydrolases may have the ability to complement this hydrolysis. Alternatively, opening of the epoxide ring could be achieved non-enzymatically. The next step is the deoxygenation of ring A to yield the 5,8-dihydroxyanthraquinone which is most likely catalyzed by the NADPH dehydrogenase encoded by ver1. The last stages of DOTH biosynthesis are proposed to involve hydroxylation of the bisfuran. OrdB and norB might have oxidative roles here. An alternative possibility is that cytochrome P450 monoogenases such as avnA and cypX might perform these steps in addition to previously proposed steps. The sequence is that of Versicolorin reductase 1 from Dothistroma septosporum (Red band needle blight fungus).